Here is a 201-residue protein sequence, read N- to C-terminus: Small ribosomal subunit protein uS4c (201 aa).

Residues 20–43 (GLTSKRPRAGSDLRNQSRAGKKSQ) are disordered. Residues 89-150 (MRLDNILFRL…EQKSRVMIQN (62 aa)) enclose the S4 RNA-binding domain.

Belongs to the universal ribosomal protein uS4 family. Part of the 30S ribosomal subunit. Contacts protein S5. The interaction surface between S4 and S5 is involved in control of translational fidelity.

Its subcellular location is the plastid. It is found in the chloroplast. Functionally, one of the primary rRNA binding proteins, it binds directly to 16S rRNA where it nucleates assembly of the body of the 30S subunit. Its function is as follows. With S5 and S12 plays an important role in translational accuracy. The sequence is that of Small ribosomal subunit protein uS4c (rps4) from Populus alba (White poplar).